A 157-amino-acid chain; its full sequence is Xanthine-guanine phosphoribosyltransferase (157 aa).

Residues 42–43 (RG) and 93–101 (DDLVDTGNT) each bind 5-phospho-alpha-D-ribose 1-diphosphate. Mg(2+) is bound at residue Asp94. Guanine-binding residues include Asp97 and Ile140. Xanthine contacts are provided by Asp97 and Ile140. GMP-binding positions include 97-101 (DTGNT) and 139-140 (WI).

Belongs to the purine/pyrimidine phosphoribosyltransferase family. XGPT subfamily. Homotetramer. Mg(2+) serves as cofactor.

It is found in the cell inner membrane. It catalyses the reaction GMP + diphosphate = guanine + 5-phospho-alpha-D-ribose 1-diphosphate. It carries out the reaction XMP + diphosphate = xanthine + 5-phospho-alpha-D-ribose 1-diphosphate. The catalysed reaction is IMP + diphosphate = hypoxanthine + 5-phospho-alpha-D-ribose 1-diphosphate. It functions in the pathway purine metabolism; GMP biosynthesis via salvage pathway; GMP from guanine: step 1/1. The protein operates within purine metabolism; XMP biosynthesis via salvage pathway; XMP from xanthine: step 1/1. Functionally, purine salvage pathway enzyme that catalyzes the transfer of the ribosyl-5-phosphate group from 5-phospho-alpha-D-ribose 1-diphosphate (PRPP) to the N9 position of the 6-oxopurines guanine and xanthine to form the corresponding ribonucleotides GMP (guanosine 5'-monophosphate) and XMP (xanthosine 5'-monophosphate), with the release of PPi. To a lesser extent, also acts on hypoxanthine. This chain is Xanthine-guanine phosphoribosyltransferase, found in Actinobacillus pleuropneumoniae serotype 5b (strain L20).